A 504-amino-acid polypeptide reads, in one-letter code: Acid phosphatase A (504 aa).

A signal peptide spans 1 to 22 (MYTLLDILKGLPLLAVAAIASA). Residues asparagine 84, asparagine 112, asparagine 168, asparagine 260, asparagine 415, asparagine 450, and asparagine 474 are each glycosylated (N-linked (GlcNAc...) asparagine).

Belongs to the metallophosphoesterase superfamily. Purple acid phosphatase family. Monomer.

It is found in the secreted. The enzyme catalyses a phosphate monoester + H2O = an alcohol + phosphate. In terms of biological role, acid phosphatase involved in the regulation of fungal phenotypic traits and virulence in C.parasitica. This is Acid phosphatase A from Cryphonectria parasitica (strain ATCC 38755 / EP155).